A 308-amino-acid chain; its full sequence is Very-long-chain enoyl-CoA reductase (308 aa).

Topologically, residues 1–86 are cytoplasmic; it reads MKHYEVEILD…YFRDLGAQIS (86 aa). Lysine 22 is subject to N6-acetyllysine. Serine 58 is subject to Phosphoserine. At lysine 60 the chain carries N6-acetyllysine. The helical transmembrane segment at 87 to 106 threads the bilayer; the sequence is WVTVFLTEYAGPLFIYLLFY. Residues 107–124 lie on the Lumenal side of the membrane; the sequence is FRVPFIYGHKYDFTSSRH. A helical membrane pass occupies residues 125 to 147; that stretch reads TVVHLACICHSFHYIKRLLETLF. At 148–158 the chain is on the cytoplasmic side; it reads VHRFSHGTMPL. The helical transmembrane segment at 159–180 threads the bilayer; it reads RNIFKNCTYYWGFAAWMAYYIN. The Lumenal portion of the chain corresponds to 181–189; the sequence is HPLYTPPTY. A helical membrane pass occupies residues 190–216; the sequence is GAQQVKLALAIFVICQLGNFSIHMALR. Residues 217 to 245 lie on the Cytoplasmic side of the membrane; the sequence is DLRPAGSKTRKIPYPTKNPFTWLFLLVSC. Residues 246-262 form a helical membrane-spanning segment; it reads PNYTYEVGSWIGFAIMT. Topologically, residues 263–264 are lumenal; it reads QC. A helical transmembrane segment spans residues 265–292; the sequence is LPVALFSLVGFTQMTIWAKGKHRSYLKE. Residues 293–308 lie on the Cytoplasmic side of the membrane; sequence FRDYPPLRMPIIPFLL.

This sequence belongs to the steroid 5-alpha reductase family. In terms of assembly, interacts with ELOVL1 and LASS2. Interacts with HACD1 and HACD2 (via the third lumenal loop), but not with HACD3 and HACD4. Interacts with ELOVL1, ELOVL2, ELOVL3, ELOVL5 and ELOVL7 in the presence of acyl-CoA; interaction with HACD1/2 and that with ELOVLs are mutually exclusive. Post-translationally, glycosylated. As to expression, expressed in most tissues tested. Highly expressed in skeletal muscle.

The protein localises to the endoplasmic reticulum membrane. It catalyses the reaction a very-long-chain 2,3-saturated fatty acyl-CoA + NADP(+) = a very-long-chain (2E)-enoyl-CoA + NADPH + H(+). It carries out the reaction octadecanoyl-CoA + NADP(+) = (2E)-octadecenoyl-CoA + NADPH + H(+). The catalysed reaction is (2E,7Z,10Z,13Z,16Z)-docosapentaenoyl-CoA + NADPH + H(+) = (7Z,10Z,13Z,16Z)-docosatetraenoyl-CoA + NADP(+). The enzyme catalyses (2E,7Z,10Z,13Z,16Z,19Z)-docosahexaenoyl-CoA + NADPH + H(+) = (7Z,10Z,13Z,16Z,19Z)-docosapentaenoyl-CoA + NADP(+). It catalyses the reaction (2E,8Z,11Z,14Z)-eicosatetraenoyl-CoA + NADPH + H(+) = (8Z,11Z,14Z)-eicosatrienoyl-CoA + NADP(+). It carries out the reaction (2E)-hexadecenoyl-CoA + NADPH + H(+) = hexadecanoyl-CoA + NADP(+). It participates in lipid metabolism; fatty acid biosynthesis. The protein operates within lipid metabolism; sphingolipid metabolism. Its function is as follows. Involved in both the production of very long-chain fatty acids for sphingolipid synthesis and the degradation of the sphingosine moiety in sphingolipids through the sphingosine 1-phosphate metabolic pathway. Catalyzes the last of the four reactions of the long-chain fatty acids elongation cycle. This endoplasmic reticulum-bound enzymatic process, allows the addition of 2 carbons to the chain of long- and very long-chain fatty acids/VLCFAs per cycle. This enzyme reduces the trans-2,3-enoyl-CoA fatty acid intermediate to an acyl-CoA that can be further elongated by entering a new cycle of elongation. Thereby, it participates in the production of VLCFAs of different chain lengths that are involved in multiple biological processes as precursors of membrane lipids and lipid mediators. Catalyzes the saturation step of the sphingosine 1-phosphate metabolic pathway, the conversion of trans-2-hexadecenoyl-CoA to palmitoyl-CoA. The polypeptide is Very-long-chain enoyl-CoA reductase (TECR) (Homo sapiens (Human)).